A 65-amino-acid polypeptide reads, in one-letter code: Large ribosomal subunit protein bL35 (65 aa).

This sequence belongs to the bacterial ribosomal protein bL35 family.

In Thermoanaerobacter pseudethanolicus (strain ATCC 33223 / 39E) (Clostridium thermohydrosulfuricum), this protein is Large ribosomal subunit protein bL35.